The chain runs to 463 residues: Annexin A7 (463 aa).

Residues 1–18 are compositionally biased toward pro residues; that stretch reads MSYPGYPPTGYPPFPGYP. Disordered stretches follow at residues 1 to 34 and 77 to 149; these read MSYP…QYPY and SPGG…MTQG. Positions 1–143 are repeat-rich region; sequence MSYPGYPPTG…GGQAPYPSQP (143 aa). The 3 X 5 AA tandem repeats of G-Y-P-P-X stretch occupies residues 5–20; that stretch reads GYPPTGYPPFPGYPPA. Gly residues predominate over residues 86 to 99; it reads GGQGFGAPPGGAGF. 4 Annexin repeats span residues 160 to 231, 232 to 303, 315 to 387, and 391 to 462; these read FDAM…ALFM, PSTY…SMCQ, QMAQ…TILQ, and NRPA…AIVG. N6-acetyllysine is present on K208.

This sequence belongs to the annexin family. As to quaternary structure, interacts with PDCD6.

Calcium/phospholipid-binding protein which promotes membrane fusion and is involved in exocytosis. The chain is Annexin A7 (Anxa7) from Mus musculus (Mouse).